An 84-amino-acid polypeptide reads, in one-letter code: Three-finger toxin MALT0070C (84 aa).

Positions Met1–Thr21 are cleaved as a signal peptide. 4 disulfide bridges follow: Cys24-Cys43, Cys36-Cys60, Cys64-Cys71, and Cys72-Cys77.

Belongs to the three-finger toxin family. Short-chain subfamily. In terms of tissue distribution, expressed by the venom gland.

It localises to the secreted. This chain is Three-finger toxin MALT0070C, found in Micrurus altirostris (Uruguayan coral snake).